We begin with the raw amino-acid sequence, 462 residues long: Argininosuccinate lyase (462 aa).

The protein belongs to the lyase 1 family. Argininosuccinate lyase subfamily.

The protein localises to the cytoplasm. It catalyses the reaction 2-(N(omega)-L-arginino)succinate = fumarate + L-arginine. Its pathway is amino-acid biosynthesis; L-arginine biosynthesis; L-arginine from L-ornithine and carbamoyl phosphate: step 3/3. The protein is Argininosuccinate lyase of Bacillus anthracis (strain A0248).